We begin with the raw amino-acid sequence, 433 residues long: Glutamate-1-semialdehyde 2,1-aminomutase (433 aa).

K272 bears the N6-(pyridoxal phosphate)lysine mark.

It belongs to the class-III pyridoxal-phosphate-dependent aminotransferase family. HemL subfamily. In terms of assembly, homodimer. The cofactor is pyridoxal 5'-phosphate.

It is found in the cytoplasm. It carries out the reaction (S)-4-amino-5-oxopentanoate = 5-aminolevulinate. It participates in porphyrin-containing compound metabolism; protoporphyrin-IX biosynthesis; 5-aminolevulinate from L-glutamyl-tRNA(Glu): step 2/2. The polypeptide is Glutamate-1-semialdehyde 2,1-aminomutase (Methylacidiphilum infernorum (isolate V4) (Methylokorus infernorum (strain V4))).